The primary structure comprises 526 residues: MNFANFPWLSTIILFPIIAALFLPLIPDKDGKTVRWYALTIGLIDFVIIVTAFYTGYDFGNPNLQLVESYTWVEAIDLRWSVGADGLSMPLILLTGFITTLAILAAWPVSFKPKLFYFLMLLMYGGQIAVFAVQDMLLFFFTWELELVPVYLILSIWGGKKRLYAATKFILYTAGGSLFILIAALTMAFYGDTVTFDMTAIAQKDFGINLQLLLYGGLLIAYGVKLPIFPLHTWLPDAHGEATAPAHMLLAGILLKMGGYALLRMNAGMLPDAHALFGPVLVILGVVNIVYAALTSFAQRNLKRKIAYSSISHMGFVLIGMASFTDLGTSGAMLQMISHGLIGASLFFMVGATYDRTHTLMLDEMGGVGKKMKKIFAMWTTCSMASLALPGMSGFVAELMVFVGFATSDAYSPTFRVIIVFLAAVGVILTPIYLLSMLREILYGPENKELVAHEKLIDAEPREVFVIACLLIPIIGIGLYPKAVTQIYASTTENLTAILRQSVPSLQQTAQAPSLDVAVLRAPEIR.

The next 14 membrane-spanning stretches (helical) occupy residues 6-26 (FPWL…LPLI), 36-56 (WYAL…FYTG), 91-111 (LILL…PVSF), 113-133 (PKLF…VFAV), 137-157 (LLFF…LSIW), 169-189 (FILY…TMAF), 212-232 (LLLY…FPLH), 243-263 (TAPA…YALL), 275-295 (ALFG…AALT), 306-326 (IAYS…SFTD), 332-352 (AMLQ…MVGA), 375-397 (IFAM…GFVA), 417-437 (VIIV…LLSM), and 464-484 (VFVI…PKAV).

This sequence belongs to the complex I subunit 4 family.

Its subcellular location is the cellular thylakoid membrane. It catalyses the reaction a plastoquinone + NADH + (n+1) H(+)(in) = a plastoquinol + NAD(+) + n H(+)(out). It carries out the reaction a plastoquinone + NADPH + (n+1) H(+)(in) = a plastoquinol + NADP(+) + n H(+)(out). Functionally, NDH-1 shuttles electrons from NAD(P)H, via FMN and iron-sulfur (Fe-S) centers, to quinones in the respiratory chain. The immediate electron acceptor for the enzyme in this species is believed to be plastoquinone. Couples the redox reaction to proton translocation (for every two electrons transferred, four hydrogen ions are translocated across the cytoplasmic membrane), and thus conserves the redox energy in a proton gradient. This is NAD(P)H-quinone oxidoreductase chain 4 2 from Picosynechococcus sp. (strain ATCC 27264 / PCC 7002 / PR-6) (Agmenellum quadruplicatum).